The primary structure comprises 326 residues: tRNA uridine(34) hydroxylase (326 aa).

In terms of domain architecture, Rhodanese spans 123 to 217 (ADPEVFVVDT…YLEEVPEEES (95 aa)). Cysteine 177 serves as the catalytic Cysteine persulfide intermediate. The tract at residues 293 to 326 (AVRGEQHVGGESAKQRQQRRAEKLAKKDVQRKQA) is disordered. Residues 311 to 326 (RRAEKLAKKDVQRKQA) are compositionally biased toward basic and acidic residues.

Belongs to the TrhO family.

The enzyme catalyses uridine(34) in tRNA + AH2 + O2 = 5-hydroxyuridine(34) in tRNA + A + H2O. Its function is as follows. Catalyzes oxygen-dependent 5-hydroxyuridine (ho5U) modification at position 34 in tRNAs. This is tRNA uridine(34) hydroxylase from Vibrio campbellii (strain ATCC BAA-1116).